A 357-amino-acid polypeptide reads, in one-letter code: Probable dual-specificity RNA methyltransferase RlmN (357 aa).

Glutamate 92 (proton acceptor) is an active-site residue. The 233-residue stretch at 98-330 folds into the Radical SAM core domain; the sequence is QEYGLSVCVT…KKNGINCVIR (233 aa). An intrachain disulfide couples cysteine 105 to cysteine 341. 3 residues coordinate [4Fe-4S] cluster: cysteine 112, cysteine 116, and cysteine 119. S-adenosyl-L-methionine-binding positions include 164–165, serine 196, 219–221, and asparagine 297; these read GE and SLH. Residue cysteine 341 is the S-methylcysteine intermediate of the active site.

It belongs to the radical SAM superfamily. RlmN family. It depends on [4Fe-4S] cluster as a cofactor.

Its subcellular location is the cytoplasm. The catalysed reaction is adenosine(2503) in 23S rRNA + 2 reduced [2Fe-2S]-[ferredoxin] + 2 S-adenosyl-L-methionine = 2-methyladenosine(2503) in 23S rRNA + 5'-deoxyadenosine + L-methionine + 2 oxidized [2Fe-2S]-[ferredoxin] + S-adenosyl-L-homocysteine. The enzyme catalyses adenosine(37) in tRNA + 2 reduced [2Fe-2S]-[ferredoxin] + 2 S-adenosyl-L-methionine = 2-methyladenosine(37) in tRNA + 5'-deoxyadenosine + L-methionine + 2 oxidized [2Fe-2S]-[ferredoxin] + S-adenosyl-L-homocysteine. Functionally, specifically methylates position 2 of adenine 2503 in 23S rRNA and position 2 of adenine 37 in tRNAs. This is Probable dual-specificity RNA methyltransferase RlmN from Enterococcus faecalis (strain ATCC 700802 / V583).